We begin with the raw amino-acid sequence, 370 residues long: Anhydro-N-acetylmuramic acid kinase (370 aa).

12 to 19 contacts ATP; that stretch reads GTSLDGVD.

Belongs to the anhydro-N-acetylmuramic acid kinase family.

The catalysed reaction is 1,6-anhydro-N-acetyl-beta-muramate + ATP + H2O = N-acetyl-D-muramate 6-phosphate + ADP + H(+). Its pathway is amino-sugar metabolism; 1,6-anhydro-N-acetylmuramate degradation. The protein operates within cell wall biogenesis; peptidoglycan recycling. Functionally, catalyzes the specific phosphorylation of 1,6-anhydro-N-acetylmuramic acid (anhMurNAc) with the simultaneous cleavage of the 1,6-anhydro ring, generating MurNAc-6-P. Is required for the utilization of anhMurNAc either imported from the medium or derived from its own cell wall murein, and thus plays a role in cell wall recycling. This chain is Anhydro-N-acetylmuramic acid kinase, found in Pectobacterium carotovorum subsp. carotovorum (strain PC1).